The chain runs to 611 residues: Chaperone protein DnaK (611 aa).

Threonine 173 is subject to Phosphothreonine; by autocatalysis. Over residues alanine 579–alanine 592 the composition is skewed to low complexity. The segment at alanine 579–asparagine 598 is disordered.

This sequence belongs to the heat shock protein 70 family.

Functionally, acts as a chaperone. The chain is Chaperone protein DnaK from Bacillus cereus (strain AH187).